Here is a 302-residue protein sequence, read N- to C-terminus: Deoxyhypusine hydroxylase (302 aa).

M1 carries the post-translational modification N-acetylmethionine. HEAT-like PBS-type repeat units follow at residues 54-80, 87-113, 175-201, 206-232, and 239-265; these read LKHE…VLQD, VRHE…YSTD, ERYR…GLKC, FRHE…TLAR, and VRHE…YITD. The Fe cation site is built by H56, H89, and E90. Fe cation-binding residues include H208, H241, and E242.

It belongs to the deoxyhypusine hydroxylase family. It depends on Fe(2+) as a cofactor.

The enzyme catalyses [eIF5A protein]-deoxyhypusine + AH2 + O2 = [eIF5A protein]-hypusine + A + H2O. It functions in the pathway protein modification; eIF5A hypusination. Functionally, catalyzes the hydroxylation of the N(6)-(4-aminobutyl)-L-lysine intermediate produced by deoxyhypusine synthase/DHPS on a critical lysine of the eukaryotic translation initiation factor 5A/eIF-5A. This is the second step of the post-translational modification of that lysine into an unusual amino acid residue named hypusine. Hypusination is unique to mature eIF-5A factor and is essential for its function. This Rattus norvegicus (Rat) protein is Deoxyhypusine hydroxylase (Dohh).